The primary structure comprises 136 residues: Polyadenylate-binding protein-interacting protein 2B (136 aa).

Positions Asn-15 to Ser-25 are enriched in polar residues. Disordered regions lie at residues Asn-15–Lys-40 and Ser-107–Tyr-136. Residues Lys-27–Lys-40 show a composition bias toward basic and acidic residues.

This sequence belongs to the PAIP2 family. As to quaternary structure, interacts (via central acidic portion and C-terminus) with PABPC1 (via the second and third RRM domains and the C-terminus). Post-translationally, ubiquitinated in vitro. In terms of tissue distribution, expressed at very high levels in pancreas, at high levels in testis and at moderately high levels in brain, heart and lung (at protein level).

Its function is as follows. Inhibits translation of capped and polyadenylated mRNAs by displacing PABPC1 from the poly(A) tail. This Mus musculus (Mouse) protein is Polyadenylate-binding protein-interacting protein 2B (Paip2b).